Reading from the N-terminus, the 400-residue chain is Elongation factor Tu (400 aa).

In terms of domain architecture, tr-type G spans 10 to 209 (KPHVNVGTIG…AVDSYIPTPE (200 aa)). The tract at residues 19–26 (GHVDHGKT) is G1. GTP is bound at residue 19–26 (GHVDHGKT). Threonine 26 is a binding site for Mg(2+). Positions 60-64 (GITIS) are G2. Positions 81–84 (DCPG) are G3. GTP is bound by residues 81–85 (DCPGH) and 136–139 (NKAD). The segment at 136-139 (NKAD) is G4. Residues 174–176 (SGL) form a G5 region.

The protein belongs to the TRAFAC class translation factor GTPase superfamily. Classic translation factor GTPase family. EF-Tu/EF-1A subfamily. In terms of assembly, monomer.

The protein resides in the cytoplasm. It carries out the reaction GTP + H2O = GDP + phosphate + H(+). Functionally, GTP hydrolase that promotes the GTP-dependent binding of aminoacyl-tRNA to the A-site of ribosomes during protein biosynthesis. This Desulfitobacterium hafniense (strain DSM 10664 / DCB-2) protein is Elongation factor Tu.